Here is a 514-residue protein sequence, read N- to C-terminus: ATP synthase subunit alpha (514 aa).

170–177 provides a ligand contact to ATP; the sequence is GDRQTGKT.

The protein belongs to the ATPase alpha/beta chains family. As to quaternary structure, F-type ATPases have 2 components, CF(1) - the catalytic core - and CF(0) - the membrane proton channel. CF(1) has five subunits: alpha(3), beta(3), gamma(1), delta(1), epsilon(1). CF(0) has three main subunits: a(1), b(2) and c(9-12). The alpha and beta chains form an alternating ring which encloses part of the gamma chain. CF(1) is attached to CF(0) by a central stalk formed by the gamma and epsilon chains, while a peripheral stalk is formed by the delta and b chains.

It localises to the cell inner membrane. It catalyses the reaction ATP + H2O + 4 H(+)(in) = ADP + phosphate + 5 H(+)(out). In terms of biological role, produces ATP from ADP in the presence of a proton gradient across the membrane. The alpha chain is a regulatory subunit. This Acidithiobacillus ferridurans protein is ATP synthase subunit alpha.